Here is a 556-residue protein sequence, read N- to C-terminus: 2-succinyl-5-enolpyruvyl-6-hydroxy-3-cyclohexene-1-carboxylate synthase (556 aa).

Belongs to the TPP enzyme family. MenD subfamily. In terms of assembly, homodimer. The cofactor is Mg(2+). It depends on Mn(2+) as a cofactor. Requires thiamine diphosphate as cofactor.

It catalyses the reaction isochorismate + 2-oxoglutarate + H(+) = 5-enolpyruvoyl-6-hydroxy-2-succinyl-cyclohex-3-ene-1-carboxylate + CO2. It functions in the pathway quinol/quinone metabolism; 1,4-dihydroxy-2-naphthoate biosynthesis; 1,4-dihydroxy-2-naphthoate from chorismate: step 2/7. Its pathway is quinol/quinone metabolism; menaquinone biosynthesis. Functionally, catalyzes the thiamine diphosphate-dependent decarboxylation of 2-oxoglutarate and the subsequent addition of the resulting succinic semialdehyde-thiamine pyrophosphate anion to isochorismate to yield 2-succinyl-5-enolpyruvyl-6-hydroxy-3-cyclohexene-1-carboxylate (SEPHCHC). This Escherichia coli (strain 55989 / EAEC) protein is 2-succinyl-5-enolpyruvyl-6-hydroxy-3-cyclohexene-1-carboxylate synthase.